The following is a 901-amino-acid chain: MLIPSKLSRPVRLDHTVVRERLLAKLSGANNFRLALVTSPAGYGKTTLVSQWAAGKNELGWYSLDEGDNQQERFASYLIAAIQQATGGHCSTSEAMAQKRQYASLTSLFAQLFIELAQWHRPLYLVIDDYHLITNPVIHDAMRFFLRHQPENFTLVVLSRNLPQLGIANLRVRDQLLEIGSQQLAFNHQEAKQFFDRRLSSPIEAAESSRMCDDVAGWATALQLIALSARQNHTSAHHSARRLAGINASHLSDYLVDEVLDNVDVSTRHFLLKSAILRSMNDALIVRVTGEENGQMRLEEIERQGLFLQRMDDTGEWFSYHPLFGSFLRQRCQWELAAELPEIHRAAAESWMEQGFPSEAIHHALAAGDAQMLRDILLNHAWGLFNHSELALLEESLKALPWESLLENPRLVLLQAWLMQSQHRYSEVNTLLARAEQEIKGVMDGTLHAEFNALRAQVAINDGNPEEAERLAKLALDELPLAWFYSRIVATSVHGEVLHCKGDLSQSLSLMQQTEQMARHHDVWHYALWSLIQQSEIQFAQGFLQAAWETQERAFQLIKEQHLEQLPMHEFLVRIRAQLLWAWARLDEAEASARSGIAVLSTFQPQQQLQCLTLLVQCSLARGDLDNARSQLNRLENLLGNGRYHCDWISNADKVRVIYWQLTGDKKSAANWLRHTPKPAFANNHFLQGQWRNIARAQILLGEFEPAEIVLEELNENARSLRLMSDLNRNLLLLNQLYWQSGRKNDAQRVLLDALQLANRTGFISHFVIEGEAMAQQLRQLIQLNTLPEMEQHRAQRILREINQHHRHKFAHFDEGFVERLLNHPDVPELIRTSPLTQREWQVLGLIYSGYSNEQIAGELAVAATTIKTHIRNLYQKLGVAHRQDAVQHAQQLLKMMGYGV.

Serine 39 to threonine 46 contacts ATP. The HTH luxR-type domain maps to glutamate 829–leucine 894. A DNA-binding region (H-T-H motif) is located at residues asparagine 853 to arginine 872.

The protein belongs to the MalT family. As to quaternary structure, monomer in solution. Oligomerizes to an active state in the presence of the positive effectors ATP and maltotriose.

Activated by ATP and maltotriose, which are both required for DNA binding. Its function is as follows. Positively regulates the transcription of the maltose regulon whose gene products are responsible for uptake and catabolism of malto-oligosaccharides. Specifically binds to the promoter region of its target genes, recognizing a short DNA motif called the MalT box. In Salmonella agona (strain SL483), this protein is HTH-type transcriptional regulator MalT.